Here is a 338-residue protein sequence, read N- to C-terminus: D-erythrose-4-phosphate dehydrogenase (338 aa).

12–13 contacts NAD(+); it reads RI. Substrate-binding positions include 154–156, Arg200, 213–214, and Arg236; these read SCT and TK. Cys155 acts as the Nucleophile in catalysis. Asn318 serves as a coordination point for NAD(+).

Belongs to the glyceraldehyde-3-phosphate dehydrogenase family. Epd subfamily. Homotetramer.

It is found in the cytoplasm. The enzyme catalyses D-erythrose 4-phosphate + NAD(+) + H2O = 4-phospho-D-erythronate + NADH + 2 H(+). The protein operates within cofactor biosynthesis; pyridoxine 5'-phosphate biosynthesis; pyridoxine 5'-phosphate from D-erythrose 4-phosphate: step 1/5. Catalyzes the NAD-dependent conversion of D-erythrose 4-phosphate to 4-phosphoerythronate. The sequence is that of D-erythrose-4-phosphate dehydrogenase from Yersinia enterocolitica serotype O:8 / biotype 1B (strain NCTC 13174 / 8081).